Consider the following 196-residue polypeptide: DnaA initiator-associating protein DiaA (196 aa).

An SIS domain is found at 34 to 196 (LVQSLLNGNK…DNTLFPHQDD (163 aa)).

Belongs to the SIS family. DiaA subfamily. As to quaternary structure, homotetramer; dimer of dimers.

Its function is as follows. Required for the timely initiation of chromosomal replication via direct interactions with the DnaA initiator protein. This Yersinia pseudotuberculosis serotype O:1b (strain IP 31758) protein is DnaA initiator-associating protein DiaA.